Here is an 89-residue protein sequence, read N- to C-terminus: Late cornified envelope protein 3A (89 aa).

2 stretches are compositionally biased toward low complexity: residues 1–10 (MSCQQNQQQC) and 17–46 (PAKS…SERS). Disordered stretches follow at residues 1 to 46 (MSCQ…SERS) and 62 to 89 (CQSS…AGCC).

The protein belongs to the LCE family. As to quaternary structure, interacts with CYSRT1; the interaction is direct. Skin-specific. Expression was readily detected in adult trunk skin, adult arm skin, fetal skin, penal skin, vulva, esophagus and tongue. Not expressed in the cervix, rectum, lung, colon, or placenta.

Functionally, a structural component of the cornified envelope of the stratum corneum involved in innate cutaneous host defense. Possesses defensin-like antimicrobial activity against a broad spectrum of Gram-positive and Gram-negative bacteria, both aerobic and anaerobic species. Upon inflammation, may regulate skin barrier repair by shaping cutaneous microbiota composition and immune response to bacterial antigens. The polypeptide is Late cornified envelope protein 3A (Homo sapiens (Human)).